The following is a 997-amino-acid chain: Signal peptide, CUB and EGF-like domain-containing protein 2 (997 aa).

Residues 1-28 (MGVAGCGRPREARALLLLLLLLPPLLAA) form the signal peptide. One can recognise an EGF-like 1; calcium-binding domain in the interval 43–83 (DVDECAQGLDDCHADALCQNTPTSYKCSCKPGYQGEGRQCE). Cystine bridges form between cysteine 47/cysteine 60, cysteine 54/cysteine 69, cysteine 71/cysteine 82, cysteine 88/cysteine 100, cysteine 96/cysteine 109, cysteine 111/cysteine 124, cysteine 130/cysteine 141, and cysteine 137/cysteine 150. In terms of domain architecture, EGF-like 2; calcium-binding spans 84-125 (DMDECDNTLNGGCVHDCLNIPGNYRCTCFDGFMLAHDGHNCL). In terms of domain architecture, EGF-like 3; calcium-binding spans 126–162 (DMDECLENNGGCQHICTNVIGSYECRCKEGFFLSDNQ). EGF-like domains are found at residues 175–211 (CMNKDHGCGHICKEAPRGSVACECRPGFELAKNQKDC), 215–250 (CNHGNGGCQHSCEDTAEGPECSCHPRYRLHADGRSC), and 284–319 (CAVNNGGCDRTCKDTSTGVHCSCPTGFTLQVDGKTC). In terms of domain architecture, EGF-like 7; calcium-binding spans 321–361 (DIDECQTRNGGCNHFCKNTVGSFDCSCKKGFKLLTDEKSCQ). Intrachain disulfides connect cysteine 325/cysteine 336, cysteine 332/cysteine 345, cysteine 347/cysteine 360, cysteine 366/cysteine 376, cysteine 372/cysteine 385, cysteine 387/cysteine 399, cysteine 405/cysteine 416, cysteine 412/cysteine 425, and cysteine 427/cysteine 440. Positions 362 to 400 (DVDECSLERTCDHSCINHPGTFICACNPGYTLYSFTHCG) constitute an EGF-like 8; calcium-binding domain. In terms of domain architecture, EGF-like 9; calcium-binding spans 401–441 (DTNECSVNNGGCQQVCINTVGSYECQCHPGFKLHWNKKDCV). Asparagine 657 carries an N-linked (GlcNAc...) asparagine glycan. An intrachain disulfide couples cysteine 807 to cysteine 833. Positions 807-919 (CGGELGDFTG…RGFQVPYVTY (113 aa)) constitute a CUB domain. The tract at residues 845-854 (ILIVVPEIFL) is interaction with the cholesterol-anchor of SHH. Residues cysteine 860 and cysteine 881 are joined by a disulfide bond.

Interacts with SHH via the cholesterol anchor of the dually lipid-modified SHH (ShhNp). Interacts with PTCH1. Forms homooligomers and heterooligomers with SCUBE1 and SCUBE3. Interacts with VEGFR2. N-glycosylated. As to expression, expressed in adult heart, lung and testis.

It is found in the secreted. The protein resides in the cell surface. Its function is as follows. Lipid-binding protein required for SHH long-range signaling by binding to the dually lipid-modified SHH (ShhNp) and by promoting ShhNp mobilization, solubilization and release from the cell membrane. Acts by enhancing the proteolytic processing (shedding) of the lipid-modified N- and C- terminal of ShhNp at the cell surface. Synergizes with DISP1 to cause an increase in SHH secretion. Probable cell surface coreceptor for VEGFR2 involved in VEGFR2-mediated angiogenesis. The chain is Signal peptide, CUB and EGF-like domain-containing protein 2 from Mus musculus (Mouse).